The sequence spans 1875 residues: Nonribosomal peptide synthetase otaB (1875 aa).

Positions 202 to 590 are adenylation 1; sequence GQVRENGDRA…SIRFAGRRQA (389 aa). The Carrier domain occupies 724 to 800; it reads SPMTAAERVM…DLVAHIKDAG (77 aa). Position 761 is an O-(pantetheine 4'-phosphoryl)serine (serine 761). Residues 836-1245 form a condensation region; it reads EDVYPCTTLQ…LVSPLDEERL (410 aa). An adenylation 2 region spans residues 1264-1659; the sequence is QKQSYAQPQA…ARKDTQVKIR (396 aa).

This sequence belongs to the NRP synthetase family.

The enzyme catalyses 7-carboxymellein + L-phenylalanine + ATP = ochratoxin B + ADP + phosphate + H(+). The protein operates within mycotoxin biosynthesis. Its function is as follows. Nonribosomal peptide synthetase; part of the gene cluster that mediates the biosynthesis of ochratoxin A (OTA), a mycotoxin composed of a chlorinated type I polyketide dihydroisocoumarin moiety linked to L-phenylalanine, and demonstrated to have nephrotoxic, immunotoxic, genotoxic, neurotoxic, and teratogenic properties. OtaB is responsible for the linking of phenylalanine to the dihydroisocoumarin ring. The pathway begins with the highly reducing polyketide synthase otaA that catalyzes the formation of the isocoumarin group during the initial stages of biosynthesis, starting from one acetate and 4 malonate units, to originate the characteristic pentaketide skeleton 7-methylmellein (7-MM) of the OTA molecule. The newly identified cyclase otaY might be involved in the polyketide cyclization reaction during the initial steps of the OTA biosynthesis. 7-MM is then oxidized into 7-carboxymellein (also called ochratoxin beta) by the cytochrome P450 monooxygenase otaC. The NRPS encoded by the otaB gene is involved in the linking of phenylalanine to the dihydroisocoumarin ring. The reaction catalyzed by NRPS results in the production of ochratoxin B (OTB), which is the non-chlorinated analog of OTA and which subsequently serves as the substrate of the halogenase otaD for chlorination activity to form the final molecular structure of OTA, containing a chlorine atom in the C-5 position of the molecule. This Aspergillus carbonarius (strain ITEM 5010) protein is Nonribosomal peptide synthetase otaB.